Reading from the N-terminus, the 121-residue chain is Small ribosomal subunit protein uS13 (121 aa).

The tract at residues 96-121 (PVRGQNTKNNARTRKGKAVAIAGKKK) is disordered. The segment covering 106–121 (ARTRKGKAVAIAGKKK) has biased composition (basic residues).

The protein belongs to the universal ribosomal protein uS13 family. In terms of assembly, part of the 30S ribosomal subunit. Forms a loose heterodimer with protein S19. Forms two bridges to the 50S subunit in the 70S ribosome.

In terms of biological role, located at the top of the head of the 30S subunit, it contacts several helices of the 16S rRNA. In the 70S ribosome it contacts the 23S rRNA (bridge B1a) and protein L5 of the 50S subunit (bridge B1b), connecting the 2 subunits; these bridges are implicated in subunit movement. Contacts the tRNAs in the A and P-sites. This Streptococcus pneumoniae serotype 4 (strain ATCC BAA-334 / TIGR4) protein is Small ribosomal subunit protein uS13.